The following is a 244-amino-acid chain: Carboxy-S-adenosyl-L-methionine synthase (244 aa).

Residues Tyr40, 65 to 67 (GCS), 90 to 91 (DN), 119 to 120 (DL), Asn134, and Arg201 each bind S-adenosyl-L-methionine.

Belongs to the class I-like SAM-binding methyltransferase superfamily. Cx-SAM synthase family. In terms of assembly, homodimer.

It catalyses the reaction prephenate + S-adenosyl-L-methionine = carboxy-S-adenosyl-L-methionine + 3-phenylpyruvate + H2O. Functionally, catalyzes the conversion of S-adenosyl-L-methionine (SAM) to carboxy-S-adenosyl-L-methionine (Cx-SAM). The protein is Carboxy-S-adenosyl-L-methionine synthase of Geobacter metallireducens (strain ATCC 53774 / DSM 7210 / GS-15).